A 1338-amino-acid polypeptide reads, in one-letter code: Serine/threonine-protein kinase cek1 (1338 aa).

The 71-residue stretch at 28–98 (SKDENLQPSI…RAVNCLLKDD (71 aa)) folds into the PAS domain. Residues 484 to 554 (PDFAIGSPMS…GRSSLFSRGR (71 aa)) form a disordered region. Residues 491-501 (PMSQDSSNYSS) are compositionally biased toward polar residues. S525 is modified (phosphoserine). Positions 541–550 (PASNGRSSLF) are enriched in polar residues. The Protein kinase domain maps to 589-958 (YKILKPISKG…VEEIKAHPFF (370 aa)). ATP contacts are provided by residues 595–603 (ISKGAFGSV) and K618. D713 (proton acceptor) is an active-site residue. S748 carries the post-translational modification Phosphoserine. The span at 813-842 (ENSAEDSPTATNTPTSQVDESNIFRSTDSP) shows a compositional bias: polar residues. Disordered regions lie at residues 813–844 (ENSAEDSPTATNTPTSQVDESNIFRSTDSPRV), 1010–1035 (KLEEERPASSIPQHVSGNRKGRLRSN), and 1159–1185 (SSTMSASQSQSSMHTALPDVTEGTSSD). An AGC-kinase C-terminal domain is found at 959 to 1057 (KSVNWDTILE…RNLDFLNKAN (99 aa)). Residues 1159–1174 (SSTMSASQSQSSMHTA) show a composition bias toward low complexity. S1211 carries the post-translational modification Phosphoserine.

This sequence belongs to the protein kinase superfamily. Ser/Thr protein kinase family.

The enzyme catalyses L-seryl-[protein] + ATP = O-phospho-L-seryl-[protein] + ADP + H(+). It catalyses the reaction L-threonyl-[protein] + ATP = O-phospho-L-threonyl-[protein] + ADP + H(+). May facilitate the progression of anaphase through direct or indirect interaction with the cut8 protein. This Schizosaccharomyces pombe (strain 972 / ATCC 24843) (Fission yeast) protein is Serine/threonine-protein kinase cek1 (cek1).